The chain runs to 111 residues: Ig kappa chain V region 3368 (111 aa).

Residues 1-24 (ADIVMTQTPSSVSAAVGGTVTIKC) are framework-1. Positions 25 to 35 (QASESIGNELA) are complementarity-determining-1. Residues 36 to 50 (WYQQKPGQPPKLLIY) are framework-2. Positions 51–57 (RASKLAS) are complementarity-determining-2. Residues 58–89 (GVSSRFKGSGSGTEFTLTISGVQCDDAGIYYC) form a framework-3 region. The tract at residues 90-101 (QQDWNSNNVVNN) is complementarity-determining-3. A framework-4 region spans residues 102 to 111 (FGGGTEVVVK).

In Oryctolagus cuniculus (Rabbit), this protein is Ig kappa chain V region 3368.